The chain runs to 177 residues: Interleukin-1 receptor antagonist protein (177 aa).

A signal peptide spans 1–25; that stretch reads MRPSRSTRRHLISLLLFLFHSETAC. Cys-91 and Cys-141 form a disulfide bridge. Residue Asn-109 is glycosylated (N-linked (GlcNAc...) asparagine).

Belongs to the IL-1 family.

It localises to the secreted. In terms of biological role, anti-inflammatory antagonist of interleukin-1 family of proinflammatory cytokines such as interleukin-1beta/IL1B and interleukin-1alpha/IL1A. Protects from immune dysregulation and uncontrolled systemic inflammation triggered by IL1 for a range of innate stimulatory agents such as pathogens. The chain is Interleukin-1 receptor antagonist protein (IL1RN) from Oryctolagus cuniculus (Rabbit).